The primary structure comprises 1080 residues: Zorya protein ZorD (1080 aa).

The 184-residue stretch at 596-779 (LRSPEETAGC…WSLFDFAQPG (184 aa)) folds into the Helicase ATP-binding domain. Positions 904–1069 (KLNWLLKILA…DMLCATPDLS (166 aa)) constitute a Helicase C-terminal domain.

Its function is as follows. Component of antiviral defense system Zorya type I, composed of ZorA, ZorB, ZorC and ZorD. Expression of Zorya type I in E.coli (strain MG1655) confers 10,000-fold resistance to phage SECphi27, 100-fold resistance to lambda, and 10-fold resistance to T7. While most T7 infected Zorya-containing cells undergo abortive infection, a minority produce viable phage progeny. These eventually accumulate to a high multiplicity of infection, leading to culture collapse by 2 hours after initial infection. ZorA and ZorB probably assemble in the cell inner membrane and exert their effect there. This may have ATPase activity. This Escherichia coli O139:H28 (strain E24377A / ETEC) protein is Zorya protein ZorD.